The primary structure comprises 600 residues: UvrABC system protein C (600 aa).

The GIY-YIG domain occupies 16-94 (EKPGCYQYFD…IKEYQPRYNV (79 aa)). The 36-residue stretch at 208 to 243 (HRLVRMYRDRMQAYSEELRFEEAQICKERIELLERY) folds into the UVR domain.

Belongs to the UvrC family. Interacts with UvrB in an incision complex.

It localises to the cytoplasm. The UvrABC repair system catalyzes the recognition and processing of DNA lesions. UvrC both incises the 5' and 3' sides of the lesion. The N-terminal half is responsible for the 3' incision and the C-terminal half is responsible for the 5' incision. The sequence is that of UvrABC system protein C from Porphyromonas gingivalis (strain ATCC 33277 / DSM 20709 / CIP 103683 / JCM 12257 / NCTC 11834 / 2561).